The following is a 321-amino-acid chain: D-alanine--D-alanine ligase (321 aa).

An ATP-grasp domain is found at 121–315 (RSWFLTNNIN…FVNLIEEILK (195 aa)). 148–199 (IKRPYVIKPFTQGSSIGVEVIFEEDDFNFANYDFPYGDEVIIEKYIKGRELQ) is a binding site for ATP. Mg(2+)-binding residues include E268, E282, and N284.

It belongs to the D-alanine--D-alanine ligase family. Requires Mg(2+) as cofactor. Mn(2+) serves as cofactor.

The protein resides in the cytoplasm. It carries out the reaction 2 D-alanine + ATP = D-alanyl-D-alanine + ADP + phosphate + H(+). The protein operates within cell wall biogenesis; peptidoglycan biosynthesis. Functionally, cell wall formation. This chain is D-alanine--D-alanine ligase, found in Rickettsia bellii (strain OSU 85-389).